A 513-amino-acid chain; its full sequence is OBERON-like protein (513 aa).

The segment at 166–235 adopts a PHD-type zinc-finger fold; it reads NGFCNLCMCV…VFRCQACSXT (70 aa). Positions 372-469 form a coiled coil; it reads RELADKAREA…LYEKIKLQES (98 aa). The disordered stretch occupies residues 493–513; that stretch reads YNGPPKADSQSNDCHPFRTNP. Over residues 500–513 the composition is skewed to polar residues; that stretch reads DSQSNDCHPFRTNP.

In terms of assembly, self-interacts and probably forms heteromers. Binds to VPg of pea seed borne mosaic virus (PSbMV), turnip mosaic virus (TuMV) and lettuce mosaic virus (LMV), but not with VPg of tobacco etch virus (TEV), cowpea mosaic virus (CPMV), tomato black ring virus (TBRV) and grapevine fan leaf virus (GFLV).

The protein localises to the nucleus. Required for the maintenance and/or establishment of both the shoot and root meristems, probably by controlling the expression of the meristem genes and of genes required for auxin responses. Involved in the development of the basal pole and in auxin-mediated root and vascular development in the embryo. Confers sensitivity to turnip mosaic virus (TuMV) probably by promoting viral movement and multiplication via interaction with TuMV VPg. This chain is OBERON-like protein (PVIP), found in Pisum sativum (Garden pea).